Consider the following 84-residue polypeptide: Small ribosomal subunit protein uS17 (84 aa).

This sequence belongs to the universal ribosomal protein uS17 family. Part of the 30S ribosomal subunit.

Its function is as follows. One of the primary rRNA binding proteins, it binds specifically to the 5'-end of 16S ribosomal RNA. The protein is Small ribosomal subunit protein uS17 of Clostridium botulinum (strain Alaska E43 / Type E3).